The following is a 110-amino-acid chain: Acylphosphatase (110 aa).

Residues 20–108 (RAHIFVRGKV…GEFNDFSILP (89 aa)) form the Acylphosphatase-like domain. Catalysis depends on residues Arg35 and Asn53.

Belongs to the acylphosphatase family.

The enzyme catalyses an acyl phosphate + H2O = a carboxylate + phosphate + H(+). The protein is Acylphosphatase (acyP) of Pyrobaculum calidifontis (strain DSM 21063 / JCM 11548 / VA1).